Here is a 156-residue protein sequence, read N- to C-terminus: MSRRHSAEKREIIPDAKYGDVVLTKFMNSIMYEGKKSTAERIVYGAFDIVENRARANPIEVFRAALDNVAPAIEVRSRRVGGATYQVPVEVRTERRQALAIRWLIQAARGRNDRTMIERLSAELLDAANNRGNAVKKREDTHRMAEANRAFSHYRW.

It belongs to the universal ribosomal protein uS7 family. In terms of assembly, part of the 30S ribosomal subunit. Contacts proteins S9 and S11.

One of the primary rRNA binding proteins, it binds directly to 16S rRNA where it nucleates assembly of the head domain of the 30S subunit. Is located at the subunit interface close to the decoding center, probably blocks exit of the E-site tRNA. This chain is Small ribosomal subunit protein uS7, found in Methylorubrum extorquens (strain CM4 / NCIMB 13688) (Methylobacterium extorquens).